Reading from the N-terminus, the 447-residue chain is NADH-quinone oxidoreductase subunit F (447 aa).

NAD(+) is bound at residue 61 to 70 (GRGGAGFSTG). 174 to 221 (GAGRYICGEETALINSLEGRRANPRAKPPFPAVFGLWGKPTCVNNVET) is an FMN binding site. C352, C355, C358, and C399 together coordinate [4Fe-4S] cluster.

This sequence belongs to the complex I 51 kDa subunit family. Composed of 13 different subunits. Subunits NuoCD, E, F, and G constitute the peripheral sector of the complex. Requires [4Fe-4S] cluster as cofactor. The cofactor is FMN.

The catalysed reaction is a quinone + NADH + 5 H(+)(in) = a quinol + NAD(+) + 4 H(+)(out). In terms of biological role, NDH-1 shuttles electrons from NADH, via FMN and iron-sulfur (Fe-S) centers, to quinones in the respiratory chain. Couples the redox reaction to proton translocation (for every two electrons transferred, four hydrogen ions are translocated across the cytoplasmic membrane), and thus conserves the redox energy in a proton gradient. This Buchnera aphidicola subsp. Schizaphis graminum (strain Sg) protein is NADH-quinone oxidoreductase subunit F (nuoF).